A 445-amino-acid chain; its full sequence is E3 ubiquitin-protein ligase MYLIP (445 aa).

Residues 1 to 279 (MLCYVTRPDA…ETHAFYRCDT (279 aa)) enclose the FERM domain. Fe cation contacts are provided by Cys-360, Cys-363, and Cys-368. The segment at 387-422 (CMVCCEEEINSTFCPCGHTVCCESCAAQLQSCPVCR) adopts an RING-type zinc-finger fold. The interval 431–433 (VYL) is critical for homodimerization.

Homodimer. Interacts with the E2 ubiquitin-conjugating enzyme, UBE2D1 (via RING-type zinc finger). Interacts with myosin regulatory light chain (MRLC) and TMEM4. Post-translationally, autoubiquitinated. In terms of tissue distribution, ubiquitously expressed.

It localises to the cytoplasm. The protein resides in the cell membrane. The enzyme catalyses S-ubiquitinyl-[E2 ubiquitin-conjugating enzyme]-L-cysteine + [acceptor protein]-L-lysine = [E2 ubiquitin-conjugating enzyme]-L-cysteine + N(6)-ubiquitinyl-[acceptor protein]-L-lysine.. It functions in the pathway protein modification; protein ubiquitination. With respect to regulation, can bind 1 iron ion per dimer. Iron binding seems to decrease LDLR degradation activity. Its function is as follows. E3 ubiquitin-protein ligase that mediates ubiquitination and subsequent proteasomal degradation of myosin regulatory light chain (MRLC), LDLR, VLDLR and LRP8. Activity depends on E2 enzymes of the UBE2D family. Proteasomal degradation of MRLC leads to inhibit neurite outgrowth in presence of NGF by counteracting the stabilization of MRLC by saposin-like protein (CNPY2/MSAP) and reducing CNPY2-stimulated neurite outgrowth. Acts as a sterol-dependent inhibitor of cellular cholesterol uptake by mediating ubiquitination and subsequent degradation of LDLR. This Homo sapiens (Human) protein is E3 ubiquitin-protein ligase MYLIP (MYLIP).